Consider the following 126-residue polypeptide: Protein HEAT-INDUCED TAS1 TARGET 3 (126 aa).

The protein belongs to the heat induced plant HTT protein family. In terms of tissue distribution, expressed in seedlings, leaves, stems, inflorescences and siliques.

It localises to the cytoplasm. Its subcellular location is the nucleus. In terms of biological role, mediates both basal and acquired thermotolerance. This is Protein HEAT-INDUCED TAS1 TARGET 3 from Arabidopsis thaliana (Mouse-ear cress).